The chain runs to 492 residues: MSESVLETERYAHEELERLQQAIVDRQVANPKAPRERLRLEHQSAQFLNQFRETSKKLLVSHESSDRLKDQEVARINADDDLTEFYKSLGEIQEFHKKYPDHKVEDLSQLYSIKPSQPGIDEIDTLFRGEEMYGRFMDLNECYEEYINLSNVQHISYLEYLKNLEDFDQIPKPEKNQTYINYITHLYEYLVSFYRRTHPLSNLDKIIAVFDTEFDAAWEAGLPGWYSHNAEAEKDGKDSTEAFYCEVCQKFFGKITVFEAHKKSKAHNKAVKRMQSSSPSTTSNTNEKQKGPKAIARIEFLIKKLTSLLDDVRKDTRENVVRRQTLTAAERLAEVEAAEREAFEQSTPSVSVEGNQDEESDQDDEEKIYNPLKLPLGWDGKPIPFWLWKLHGLGKEFPCEICGNYVYMGRKAFDKHFTEQRHIYGLKCLGISPSPLFNQITSIDEALQLWQKYKVDSKKRETTMASLNEMEDDEGNVMSEKVYNDLKAQGLL.

A C2H2-type zinc finger spans residues 243–267 (FYCEVCQKFFGKITVFEAHKKSKAH). Disordered stretches follow at residues 268-291 (NKAV…KQKG) and 337-365 (AAER…QDDE). The span at 276–286 (SSSPSTTSNTN) shows a compositional bias: low complexity. Over residues 345-354 (QSTPSVSVEG) the composition is skewed to polar residues. Residues 355 to 365 (NQDEESDQDDE) are compositionally biased toward acidic residues. Ser360 bears the Phosphoserine mark. The Matrin-type zinc finger occupies 397–428 (FPCEICGNYVYMGRKAFDKHFTEQRHIYGLKC).

The protein belongs to the SF3A3 family. As to quaternary structure, belongs to the 40S cdc5-associated complex (or cwf complex), a spliceosome sub-complex reminiscent of a late-stage spliceosome composed of the U2, U5 and U6 snRNAs and at least brr2, cdc5, cwf2/prp3, cwf3/syf1, cwf4/syf3, cwf5/ecm2, spp42/cwf6, cwf7/spf27, cwf8, cwf9, cwf10, cwf11, cwf12, prp45/cwf13, cwf14, cwf15, cwf16, cwf17, cwf18, cwf19, cwf20, cwf21, cwf22, cwf23, cwf24, cwf25, cwf26, cyp7/cwf27, cwf28, cwf29/ist3, lea1, msl1, prp5/cwf1, prp10, prp12/sap130, prp17, prp22, sap61, sap62, sap114, sap145, slu7, smb1, smd1, smd3, smf1, smg1 and syf2.

The protein localises to the nucleus. The protein resides in the cytoplasm. Involved in mRNA splicing where it associates with cdc5 and the other cwf proteins as part of the spliceosome. This Schizosaccharomyces pombe (strain 972 / ATCC 24843) (Fission yeast) protein is Pre-mRNA-splicing factor sap61 (sap61).